The sequence spans 320 residues: Ribosomal protein L11 methyltransferase (320 aa).

Residues threonine 165, glycine 186, aspartate 208, and asparagine 251 each coordinate S-adenosyl-L-methionine.

This sequence belongs to the methyltransferase superfamily. PrmA family.

The protein resides in the cytoplasm. It carries out the reaction L-lysyl-[protein] + 3 S-adenosyl-L-methionine = N(6),N(6),N(6)-trimethyl-L-lysyl-[protein] + 3 S-adenosyl-L-homocysteine + 3 H(+). Functionally, methylates ribosomal protein L11. This Limosilactobacillus fermentum (strain NBRC 3956 / LMG 18251) (Lactobacillus fermentum) protein is Ribosomal protein L11 methyltransferase.